We begin with the raw amino-acid sequence, 118 residues long: Ribosome-binding factor A (118 aa).

Belongs to the RbfA family. Monomer. Binds 30S ribosomal subunits, but not 50S ribosomal subunits or 70S ribosomes.

It localises to the cytoplasm. Functionally, one of several proteins that assist in the late maturation steps of the functional core of the 30S ribosomal subunit. Associates with free 30S ribosomal subunits (but not with 30S subunits that are part of 70S ribosomes or polysomes). Required for efficient processing of 16S rRNA. May interact with the 5'-terminal helix region of 16S rRNA. The polypeptide is Ribosome-binding factor A (Bacillus thuringiensis (strain Al Hakam)).